Here is a 223-residue protein sequence, read N- to C-terminus: Probable glutathione S-transferase (223 aa).

Residues Ala2 to Ser81 form the GST N-terminal domain. Glutathione is bound by residues Ser12, Lys39, Val53, and Glu65–Ser66. The 127-residue stretch at Asp86–Phe212 folds into the GST C-terminal domain.

It belongs to the GST superfamily. HSP26 family. In terms of tissue distribution, root tip-specific expression.

The enzyme catalyses RX + glutathione = an S-substituted glutathione + a halide anion + H(+). This is Probable glutathione S-transferase from Nicotiana tabacum (Common tobacco).